Here is a 270-residue protein sequence, read N- to C-terminus: Protein-ADP-ribose hydrolase (270 aa).

Positions 73-267 (VSVKDCQKTN…LYDTYLQKEN (195 aa)) constitute a Macro domain. 3 residues coordinate ADP-D-ribose: Asp-92, Ile-93, and Asn-106. Cys-112, His-117, and Cys-119 together coordinate Zn(2+). Cys-119, Ile-120, Asp-121, Ser-212, Thr-213, Gly-214, Glu-215, and Phe-216 together coordinate ADP-D-ribose.

Belongs to the MacroD-type family. Zn-Macro subfamily. In terms of assembly, monomer. Interacts with the lipoylated form of GcvH-L. It depends on Zn(2+) as a cofactor.

The catalysed reaction is 4-O-(ADP-D-ribosyl)-L-aspartyl-[protein] + H2O = L-aspartyl-[protein] + ADP-D-ribose + H(+). It catalyses the reaction 5-O-(ADP-D-ribosyl)-L-glutamyl-[protein] + H2O = L-glutamyl-[protein] + ADP-D-ribose + H(+). It carries out the reaction S-(ADP-D-ribosyl)-L-cysteinyl-[protein] + H2O = ADP-D-ribose + L-cysteinyl-[protein]. Its function is as follows. ADP-ribosylhydrolase that specifically reverses the SirTM-mediated mono-ADP-ribosylation at an asparatate residue of GcvH-L (SpyM50867), by releasing ADP-ribose from the target protein. May play a role in the regulation of the response to host-induced oxidative stress. It can also hydrolyze ADP-ribosyl-glutamate bonds and ADP-ribosyl-cysteine bonds. In vitro, it can remove the ADP-ribosyl modification from the human mono-ADP-ribosylated PARP1 E988Q mutant, which is primarily modified on glutamate site with only minor aspartate contribution. It can also hydrolyze the ADP-ribosyl-cysteinyl glycosidic bond of a Cys-ADP-ribosylated synthetic peptide. The protein is Protein-ADP-ribose hydrolase of Streptococcus pyogenes serotype M5 (strain Manfredo).